The following is a 225-amino-acid chain: Fibronectin type III domain-containing protein 10 (225 aa).

A signal peptide spans 1–19 (MRAPPLLLLLAACAPPSGA). The Extracellular segment spans residues 20–181 (AVDPTPPGWE…FTAEPAAMQE (162 aa)). A Fibronectin type-III domain is found at 72 to 167 (LASAGGSLRA…ELAAAPPELA (96 aa)). Residues Asn-86 and Asn-109 are each glycosylated (N-linked (GlcNAc...) asparagine). A helical membrane pass occupies residues 182 to 202 (IVVAMTAVGGSICVMLVVICL). Residues 203-225 (LVAYITENLMHPTFRRPSLRRQP) are Cytoplasmic-facing.

Its subcellular location is the membrane. In Rattus norvegicus (Rat), this protein is Fibronectin type III domain-containing protein 10 (Fndc10).